The sequence spans 356 residues: tRNA-specific 2-thiouridylase MnmA (356 aa).

Residues 8–15 and Met34 contribute to the ATP site; that span reads GMSGGVDS. Cys103 functions as the Nucleophile in the catalytic mechanism. A disulfide bond links Cys103 and Cys199. Gly127 provides a ligand contact to ATP. Residues 149–151 are interaction with tRNA; that stretch reads KDQ. Catalysis depends on Cys199, which acts as the Cysteine persulfide intermediate. The interval 305 to 306 is interaction with tRNA; sequence RY.

It belongs to the MnmA/TRMU family.

Its subcellular location is the cytoplasm. The enzyme catalyses S-sulfanyl-L-cysteinyl-[protein] + uridine(34) in tRNA + AH2 + ATP = 2-thiouridine(34) in tRNA + L-cysteinyl-[protein] + A + AMP + diphosphate + H(+). Its function is as follows. Catalyzes the 2-thiolation of uridine at the wobble position (U34) of tRNA, leading to the formation of s(2)U34. The polypeptide is tRNA-specific 2-thiouridylase MnmA (Clostridium kluyveri (strain ATCC 8527 / DSM 555 / NBRC 12016 / NCIMB 10680 / K1)).